We begin with the raw amino-acid sequence, 358 residues long: Methylthioribose-1-phosphate isomerase (358 aa).

Substrate is bound by residues 54–56, Arg96, and Gln205; that span reads RGA. Asp246 acts as the Proton donor in catalysis. 256–257 provides a ligand contact to substrate; the sequence is NK.

Belongs to the eIF-2B alpha/beta/delta subunits family. MtnA subfamily.

It catalyses the reaction 5-(methylsulfanyl)-alpha-D-ribose 1-phosphate = 5-(methylsulfanyl)-D-ribulose 1-phosphate. It participates in amino-acid biosynthesis; L-methionine biosynthesis via salvage pathway; L-methionine from S-methyl-5-thio-alpha-D-ribose 1-phosphate: step 1/6. Catalyzes the interconversion of methylthioribose-1-phosphate (MTR-1-P) into methylthioribulose-1-phosphate (MTRu-1-P). The sequence is that of Methylthioribose-1-phosphate isomerase from Pseudomonas syringae pv. tomato (strain ATCC BAA-871 / DC3000).